The following is a 326-amino-acid chain: Cathepsin L-like proteinase (326 aa).

Positions 1-15 (MRLFILAVLTVGVLG) are cleaved as a signal peptide. Residues 16-106 (SNDDLWHQWK…HGVPYEANNR (91 aa)) constitute a propeptide, activation peptide. 3-hydroxyproline; partial is present on Pro109. 3 cysteine pairs are disulfide-bonded: Cys129-Cys172, Cys163-Cys204, and Cys262-Cys311. Cys132 is an active-site residue. Pro196 carries the post-translational modification 3-hydroxyproline; partial. Active-site residues include His269 and Asn289.

The protein belongs to the peptidase C1 family. In terms of assembly, monomer. Post-translationally, contains cysteine residues involved in intramolecular disulfide bonding.

It is found in the secreted. Its activity is regulated as follows. Strongly inhibited by Antipain, E64 and Leupeptin, and weakly inhibited by iodoacetic acid (IAA) and phenylmethylsulfonyl fluoride (PMSF). Requires the presence of dithiothreitol (DTT) for activity. Functionally, thiol protease. Probably involved in interaction with host tissues. Displays a similar activity to that of papain. Has high activity on Z-Phe-Arg-NHMec, but no activity on Z-Arg-NHMec. The chain is Cathepsin L-like proteinase from Fasciola hepatica (Liver fluke).